We begin with the raw amino-acid sequence, 88 residues long: Homeobox protein knotted-1-like 1 (88 aa).

Residues 4 to 24 (ELKLELKQGFKSRIEDVREEI) form the ELK domain. A DNA-binding region (homeobox; TALE-type) is located at residues 25–88 (LRKRRAGKLP…NQRKRNWHNN (64 aa)).

It belongs to the TALE/KNOX homeobox family. Highly expressed in the roots.

It localises to the nucleus. In Zea mays (Maize), this protein is Homeobox protein knotted-1-like 1 (KNOX1).